We begin with the raw amino-acid sequence, 630 residues long: tRNA uridine 5-carboxymethylaminomethyl modification enzyme MnmG (630 aa).

FAD is bound at residue 13–18; it reads GGGHAG. Residue 273 to 287 coordinates NAD(+); sequence GPRYCPSIEDKVMRF.

This sequence belongs to the MnmG family. In terms of assembly, homodimer. Heterotetramer of two MnmE and two MnmG subunits. It depends on FAD as a cofactor.

It is found in the cytoplasm. Its function is as follows. NAD-binding protein involved in the addition of a carboxymethylaminomethyl (cmnm) group at the wobble position (U34) of certain tRNAs, forming tRNA-cmnm(5)s(2)U34. This is tRNA uridine 5-carboxymethylaminomethyl modification enzyme MnmG from Actinobacillus pleuropneumoniae serotype 5b (strain L20).